The following is a 315-amino-acid chain: Acetaldehyde dehydrogenase (315 aa).

13–16 (SGNI) serves as a coordination point for NAD(+). The Acyl-thioester intermediate role is filled by cysteine 143. NAD(+) is bound by residues 174-182 (SAGPGTRKN) and asparagine 285.

The protein belongs to the acetaldehyde dehydrogenase family.

It carries out the reaction acetaldehyde + NAD(+) + CoA = acetyl-CoA + NADH + H(+). This chain is Acetaldehyde dehydrogenase, found in Shewanella woodyi (strain ATCC 51908 / MS32).